A 469-amino-acid polypeptide reads, in one-letter code: Glutamate--tRNA ligase (469 aa).

The short motif at 9 to 19 (PSPTGFLHVGG) is the 'HIGH' region element. Zn(2+) contacts are provided by cysteine 98, cysteine 100, cysteine 125, and aspartate 127. The short motif at 236-240 (KLSKR) is the 'KMSKS' region element. Residue lysine 239 participates in ATP binding.

Belongs to the class-I aminoacyl-tRNA synthetase family. Glutamate--tRNA ligase type 1 subfamily. Monomer. Requires Zn(2+) as cofactor.

The protein resides in the cytoplasm. The catalysed reaction is tRNA(Glu) + L-glutamate + ATP = L-glutamyl-tRNA(Glu) + AMP + diphosphate. Its function is as follows. Catalyzes the attachment of glutamate to tRNA(Glu) in a two-step reaction: glutamate is first activated by ATP to form Glu-AMP and then transferred to the acceptor end of tRNA(Glu). The sequence is that of Glutamate--tRNA ligase from Shewanella sp. (strain W3-18-1).